Reading from the N-terminus, the 383-residue chain is UDP-N-acetylglucosamine--N-acetylmuramyl-(pentapeptide) pyrophosphoryl-undecaprenol N-acetylglucosamine transferase (383 aa).

Residues Thr-10–Gly-12, Asn-124, Arg-165, Ser-190, Ile-245, and Gln-290 contribute to the UDP-N-acetyl-alpha-D-glucosamine site. The tract at residues Pro-364–Ser-383 is disordered.

This sequence belongs to the glycosyltransferase 28 family. MurG subfamily.

It localises to the cell inner membrane. It catalyses the reaction di-trans,octa-cis-undecaprenyl diphospho-N-acetyl-alpha-D-muramoyl-L-alanyl-D-glutamyl-meso-2,6-diaminopimeloyl-D-alanyl-D-alanine + UDP-N-acetyl-alpha-D-glucosamine = di-trans,octa-cis-undecaprenyl diphospho-[N-acetyl-alpha-D-glucosaminyl-(1-&gt;4)]-N-acetyl-alpha-D-muramoyl-L-alanyl-D-glutamyl-meso-2,6-diaminopimeloyl-D-alanyl-D-alanine + UDP + H(+). The protein operates within cell wall biogenesis; peptidoglycan biosynthesis. Cell wall formation. Catalyzes the transfer of a GlcNAc subunit on undecaprenyl-pyrophosphoryl-MurNAc-pentapeptide (lipid intermediate I) to form undecaprenyl-pyrophosphoryl-MurNAc-(pentapeptide)GlcNAc (lipid intermediate II). This is UDP-N-acetylglucosamine--N-acetylmuramyl-(pentapeptide) pyrophosphoryl-undecaprenol N-acetylglucosamine transferase from Anaeromyxobacter dehalogenans (strain 2CP-C).